An 86-amino-acid polypeptide reads, in one-letter code: Evasin-3 (86 aa).

Residues 1–20 (MRALLARLLLCVLVVSDSKG) form the signal peptide. 3 cysteine pairs are disulfide-bonded: C42–C57, C46–C59, and C53–C70. Residue N45 is glycosylated (N-linked (GlcNAc...) asparagine). N-linked (GlcNAc...) asparagine glycosylation occurs at N76.

As to quaternary structure, monomer.

The protein localises to the secreted. In terms of biological role, salivary chemokine-binding protein which shows chemokine neutralizing activity and binds to host chemokines CXCL1, CXCL2, CXCL3, CXCL5, CXCL6 and CXCL8. Binds to CXCL8 with 1:1 stoichiometry. Disrupts CXCL8 homodimer formation, disrupts the glycosaminoglycan-binding site of CXCL8 and inhibits the interaction of CXCL8 with CXCR2. In Rhipicephalus sanguineus (Brown dog tick), this protein is Evasin-3.